Reading from the N-terminus, the 156-residue chain is Arginine repressor (156 aa).

Belongs to the ArgR family.

It is found in the cytoplasm. It participates in amino-acid biosynthesis; L-arginine biosynthesis [regulation]. Regulates arginine biosynthesis genes. The protein is Arginine repressor of Shewanella baltica (strain OS223).